We begin with the raw amino-acid sequence, 445 residues long: Argininosuccinate synthase (445 aa).

Residues alanine 17–serine 25 and alanine 43 contribute to the ATP site. Residue tyrosine 99 coordinates L-citrulline. Residues glycine 129 and threonine 131 each coordinate ATP. 3 residues coordinate L-aspartate: threonine 131, asparagine 135, and aspartate 136. Residue asparagine 135 participates in L-citrulline binding. Aspartate 136 is a binding site for ATP. The L-citrulline site is built by arginine 139 and serine 192. Position 194 (aspartate 194) interacts with ATP. Residues threonine 201, glutamate 203, and glutamate 280 each contribute to the L-citrulline site.

It belongs to the argininosuccinate synthase family. Type 2 subfamily. As to quaternary structure, homotetramer.

The protein resides in the cytoplasm. It catalyses the reaction L-citrulline + L-aspartate + ATP = 2-(N(omega)-L-arginino)succinate + AMP + diphosphate + H(+). Its pathway is amino-acid biosynthesis; L-arginine biosynthesis; L-arginine from L-ornithine and carbamoyl phosphate: step 2/3. This Bordetella pertussis (strain Tohama I / ATCC BAA-589 / NCTC 13251) protein is Argininosuccinate synthase.